A 410-amino-acid chain; its full sequence is Formyl-CoA:oxalate CoA-transferase (410 aa).

Residues Gln18–Ser19, Leu72–Lys75, Asn96–Gly98, Arg104, and Lys136–Glu139 each bind CoA. The Nucleophile role is filled by Asp168. A disordered region spans residues Pro221 to Gln245. Position 243-245 (Gly243–Gln245) interacts with substrate.

Belongs to the CoA-transferase III family. Frc subfamily. As to quaternary structure, homodimer.

The catalysed reaction is formyl-CoA + oxalate = oxalyl-CoA + formate. Its pathway is metabolic intermediate degradation; oxalate degradation; CO(2) and formate from oxalate: step 1/2. Functionally, involved in the catabolism of oxalate and in the adapatation to low pH via the induction of the oxalate-dependent acid tolerance response (ATR). Catalyzes the transfer of the CoA moiety from formyl-CoA to oxalate. This is Formyl-CoA:oxalate CoA-transferase from Streptomyces coelicolor (strain ATCC BAA-471 / A3(2) / M145).